Consider the following 359-residue polypeptide: Protein-L-isoaspartate O-methyltransferase domain-containing protein 2 (359 aa).

Gly2 carries the N-myristoyl glycine lipid modification. Ser64 is an active-site residue. AdoMet binding motif regions lie at residues 85–94 (LNLGSGTGYL), 160–164 (YDRVY), and 181–191 (LKVGGILVMPL). The interval 240–250 (VRSLQDLARLA) is BC-box. The interval 301–328 (SNPSDDTSCEDAEEDRREVAERTLQETK) is disordered. Residues 314–328 (EDRREVAERTLQETK) are compositionally biased toward basic and acidic residues. The interval 343-346 (LPLP) is CUL-box.

The protein belongs to the methyltransferase superfamily. L-isoaspartyl/D-aspartyl protein methyltransferase family.

It is found in the cytoplasm. Functionally, may act as a substrate recognition component of an ECS (Elongin BC-CUL5-SOCS-box protein) E3 ubiquitin ligase complex which mediates the ubiquitination and subsequent proteasomal degradation of target proteins. May bind to the methyltransferase cofactor S-adenosylmethionine (AdoMet) via the N-terminal AdoMet binding motif, but probably does not display methyltransferase activity. The sequence is that of Protein-L-isoaspartate O-methyltransferase domain-containing protein 2 (Pcmtd2) from Mus musculus (Mouse).